We begin with the raw amino-acid sequence, 260 residues long: Tryptophan synthase alpha chain (260 aa).

Catalysis depends on proton acceptor residues E52 and D63.

It belongs to the TrpA family. As to quaternary structure, tetramer of two alpha and two beta chains.

The enzyme catalyses (1S,2R)-1-C-(indol-3-yl)glycerol 3-phosphate + L-serine = D-glyceraldehyde 3-phosphate + L-tryptophan + H2O. The protein operates within amino-acid biosynthesis; L-tryptophan biosynthesis; L-tryptophan from chorismate: step 5/5. Functionally, the alpha subunit is responsible for the aldol cleavage of indoleglycerol phosphate to indole and glyceraldehyde 3-phosphate. The protein is Tryptophan synthase alpha chain of Streptococcus mutans serotype c (strain ATCC 700610 / UA159).